The following is a 458-amino-acid chain: Exodeoxyribonuclease 7 large subunit (458 aa).

This sequence belongs to the XseA family. Heterooligomer composed of large and small subunits.

Its subcellular location is the cytoplasm. It catalyses the reaction Exonucleolytic cleavage in either 5'- to 3'- or 3'- to 5'-direction to yield nucleoside 5'-phosphates.. Functionally, bidirectionally degrades single-stranded DNA into large acid-insoluble oligonucleotides, which are then degraded further into small acid-soluble oligonucleotides. The sequence is that of Exodeoxyribonuclease 7 large subunit from Escherichia coli O17:K52:H18 (strain UMN026 / ExPEC).